The chain runs to 461 residues: Zinc transporter 6 (461 aa).

Over 1–33 (MGTIHLFRKPQRSFFGKLLREFRLVAADRRSWK) the chain is Cytoplasmic. Residues 34–54 (ILLFGVINLICTGFLLMWCSS) form a helical membrane-spanning segment. Topologically, residues 55–64 (TNSIALTAYT) are extracellular. The chain crosses the membrane as a helical span at residues 65-85 (YLTIFDLFSLMTCLISYWVTL). Over 86-98 (RKPSPVYSFGFER) the chain is Cytoplasmic. Residues 99 to 119 (LEVLAVFASTVLAQLGALFIL) traverse the membrane as a helical segment. Residues 120 to 134 (KESAERFLEQPEIHT) lie on the Extracellular side of the membrane. A helical membrane pass occupies residues 135–155 (GRLLVGTFVALCFNLFTMLSI). At 156-200 (RNKPFAYVSEAASTSWLQEHVADLSRSLCGIIPGLSSIFLPRMNP) the chain is on the cytoplasmic side. Residues 201–221 (FVLIDLAGAFALCITYMLIEI) form a helical membrane-spanning segment. The Extracellular portion of the chain corresponds to 222–223 (NN). Residues 224 to 244 (YFAVDTASAIAIALMTFGTMY) form a helical membrane-spanning segment. At 245-461 (PMSVYSGKVL…TNNRIGQPRP (217 aa)) the chain is on the cytoplasmic side. The interval 371 to 392 (NPVTSTPAKPSSPPPEFSFNTP) is disordered.

Belongs to the cation diffusion facilitator (CDF) transporter (TC 2.A.4) family. SLC30A subfamily. As to quaternary structure, heterodimer with SLC30A5; form a functional zinc ion transmembrane transporter. In terms of tissue distribution, expressed in brain; especially in cerebellum, hippocampus, parahippocampal gyrus, superior and middle temporal gyrus. Also expressed in B-cells, colon, eye, and lung. Lower expression was present in bone, brain, cervix, ear, heart, kidney, muscle, nerve, pancreas, prostate, skin, stomach, and testis.

The protein localises to the golgi apparatus. Its subcellular location is the trans-Golgi network membrane. Its function is as follows. Has probably no intrinsic transporter activity but together with SLC30A5 forms a functional zinc ion:proton antiporter heterodimer, mediating zinc entry into the lumen of organelles along the secretory pathway. As part of that zinc ion:proton antiporter, contributes to zinc ion homeostasis within the early secretory pathway and regulates the activation and folding of enzymes like alkaline phosphatases and enzymes involved in phosphatidylinositol glycan anchor biosynthesis. In Homo sapiens (Human), this protein is Zinc transporter 6.